A 398-amino-acid chain; its full sequence is Alpha-2,8-sialyltransferase 8F (398 aa).

The Cytoplasmic portion of the chain corresponds to 1-3; sequence MRP. A helical; Signal-anchor for type II membrane protein membrane pass occupies residues 4–24; sequence GGALLALLASLLLLLLLRLLW. Residues 25–398 lie on the Lumenal side of the membrane; it reads CPADAPGRAR…KLQFSKCEVA (374 aa). Residues Asn66, Asn93, Asn151, and Asn196 are each glycosylated (N-linked (GlcNAc...) asparagine). 2 disulfides stabilise this stretch: Cys186-Cys335 and Cys200-Cys395. Substrate contacts are provided by residues Asn214, 236–238, and 322–324; these read NPS and STG. His370 serves as the catalytic Proton donor/acceptor.

This sequence belongs to the glycosyltransferase 29 family.

It is found in the golgi apparatus membrane. It carries out the reaction a ganglioside GM3 + CMP-N-acetyl-beta-neuraminate = a ganglioside GD3 + CMP + H(+). The catalysed reaction is a ganglioside GM3 (d18:1(4E)) + CMP-N-acetyl-beta-neuraminate = a ganglioside GD3 (d18:1(4E)) + CMP + H(+). The enzyme catalyses a ganglioside GD1a (d18:1(4E)) + CMP-N-acetyl-beta-neuraminate = a ganglioside GT1a (d18:1(4E)) + CMP + H(+). It catalyses the reaction a ganglioside GD1a + CMP-N-acetyl-beta-neuraminate = a ganglioside GT1a + CMP + H(+). It carries out the reaction a ganglioside GM1b (d18:1(4E)) + CMP-N-acetyl-beta-neuraminate = a ganglioside GD1c (d18:1(4E)) + CMP + H(+). The catalysed reaction is a ganglioside GM1b + CMP-N-acetyl-beta-neuraminate = a ganglioside GD1c + CMP + H(+). The enzyme catalyses a ganglioside GM4 (d18:1(4E)) + CMP-N-acetyl-beta-neuraminate = an N-acetyl-alpha-neuraminosyl-(2-&gt;8)-N-acetyl-alpha-neuraminosyl-(2-&gt;3)-beta-D-galactosyl-(1&lt;-&gt;1')-N-acylsphing-4-enine + CMP + H(+). It catalyses the reaction N-acetyl-alpha-neuraminosyl-(2-&gt;3)-beta-D-galactosyl-(1&lt;-&gt;1')-ceramide + CMP-N-acetyl-beta-neuraminate = N-acetyl-alpha-neuraminosyl-(2-&gt;8)-N-acetyl-alpha-neuraminosyl-(2-&gt;3)-beta-D-galactosyl-(1&lt;-&gt;1')-ceramide + CMP + H(+). It carries out the reaction a ganglioside GT1b (d18:1(4E)) + CMP-N-acetyl-beta-neuraminate = a ganglioside GQ1b (d18:1(4E)) + CMP + H(+). The catalysed reaction is a ganglioside GT1b + CMP-N-acetyl-beta-neuraminate = a ganglioside GQ1b + CMP + H(+). It functions in the pathway protein modification; protein glycosylation. Functionally, alpha-2,8-sialyltransferase that prefers O-glycans to N-glycans or glycolipids as acceptor substrates. The minimal acceptor substrate is the NeuAc-alpha-2,3(6)-Gal sequence at the non-reducing end of their carbohydrate groups. The sequence is that of Alpha-2,8-sialyltransferase 8F from Homo sapiens (Human).